Here is a 146-residue protein sequence, read N- to C-terminus: Hemoglobin subunit beta-1 (146 aa).

The region spanning 2-146 (HWTAEEKQLI…VAHALARRYH (145 aa)) is the Globin domain. Residues His-63 and His-92 each contribute to the heme b site.

It belongs to the globin family. As to quaternary structure, heterotetramer of two alpha chains and two beta chains. Red blood cells.

Its function is as follows. Involved in oxygen transport from the lung to the various peripheral tissues. The sequence is that of Hemoglobin subunit beta-1 (HBB1) from Iguana iguana (Common iguana).